The sequence spans 1127 residues: Disease resistance protein RPS6 (1127 aa).

Residue Met-1 is modified to N-acetylmethionine. A TIR domain is found at 12–176 (WSYHVFPSFS…EIANDILGKM (165 aa)). Residue Glu-87 is part of the active site. LRR repeat units follow at residues 197–221 (MSSLLHLESEEVRMVGIWGPSGIGK), 540–563 (IDETDELHIHESSFKGMHNLLFLK), 587–609 (PSRLRLLRFDRYPSKCLPSNFHP), 610–632 (ENLVKLQMQQSKLEKLWDGVHSL), 633–656 (AGLRNMDLRGSRNLKEIPDLSMAT), 658–679 (LETLKLSSCSSLVELPSSIQYL), 680–704 (NKLNDLDMSYCDHLETIPSGVNLKS), 766–790 (SPTLTRLTFSNNPSFVEVPSSIQNL), 791–813 (YQLEHLEIMNCRNLVTLPTGINL), 814–834 (DSLISLDLSHCSQLKTFPDIS), and 835–857 (TNISDLNLSYTAIEEVPLSIEKL).

As to quaternary structure, interacts with EDS1. Ubiquitous.

It carries out the reaction NAD(+) + H2O = ADP-D-ribose + nicotinamide + H(+). Functionally, disease resistance (R) protein that specifically recognizes the hopA1 type III effector avirulence protein from Pseudomonas syringae. Resistance proteins guard the plant against pathogens that contain an appropriate avirulence protein via an indirect interaction with this avirulence protein. That triggers a defense system including the hypersensitive response, which restricts the pathogen growth. The chain is Disease resistance protein RPS6 from Arabidopsis thaliana (Mouse-ear cress).